Here is a 599-residue protein sequence, read N- to C-terminus: Probable acetolactate synthase large subunit (599 aa).

Residue E47 coordinates thiamine diphosphate. FAD-binding positions include R149, 258 to 279, and 301 to 320; these read HGTKPANYCLSESDVLISIGCR and DIDPAEIGKNVNVDVPIVGD. The tract at residues 404 to 484 is thiamine pyrophosphate binding; sequence QNQMWMAHYF…VVICIFDNRT (81 aa). The Mg(2+) site is built by D455 and N482.

It belongs to the TPP enzyme family. Dimer of large and small chains. It depends on Mg(2+) as a cofactor. Thiamine diphosphate is required as a cofactor.

It catalyses the reaction 2 pyruvate + H(+) = (2S)-2-acetolactate + CO2. Its pathway is amino-acid biosynthesis; L-isoleucine biosynthesis; L-isoleucine from 2-oxobutanoate: step 1/4. It functions in the pathway amino-acid biosynthesis; L-valine biosynthesis; L-valine from pyruvate: step 1/4. This chain is Probable acetolactate synthase large subunit (ilvB), found in Methanococcus aeolicus.